A 398-amino-acid chain; its full sequence is NADH-quinone oxidoreductase subunit D (398 aa).

This sequence belongs to the complex I 49 kDa subunit family. NDH-1 is composed of 14 different subunits. Subunits NuoB, C, D, E, F, and G constitute the peripheral sector of the complex.

Its subcellular location is the cell inner membrane. The catalysed reaction is a quinone + NADH + 5 H(+)(in) = a quinol + NAD(+) + 4 H(+)(out). Its function is as follows. NDH-1 shuttles electrons from NADH, via FMN and iron-sulfur (Fe-S) centers, to quinones in the respiratory chain. The immediate electron acceptor for the enzyme in this species is believed to be ubiquinone. Couples the redox reaction to proton translocation (for every two electrons transferred, four hydrogen ions are translocated across the cytoplasmic membrane), and thus conserves the redox energy in a proton gradient. In Rhodospirillum centenum (strain ATCC 51521 / SW), this protein is NADH-quinone oxidoreductase subunit D.